Here is a 264-residue protein sequence, read N- to C-terminus: Regulatory protein RecX (264 aa).

Belongs to the RecX family.

It is found in the cytoplasm. Modulates RecA activity. The polypeptide is Regulatory protein RecX (Lacticaseibacillus casei (strain BL23) (Lactobacillus casei)).